The chain runs to 251 residues: MAIHGDRDDELRLFQTGEHPCGYWSDRVARDLVLDPHDRRLGGLYPLALSWGFRRSGDLVYRPHCAHCQACVAVRIPVARFAPDRSQRRCAARNEDLEVRITAATARDDLFALYHRYLTHRHANGGMDDHGPHEFEQFLIGSWSHTRFMEMRLPGHDGQPSQLLGVAVTDVTEHGLSAVYTFFDPDHAARGLGTFAILQQIEWARREGLPHVYLGYWIRGHQKMDYKRRYRPLEAYDGRRWHDFDDELDGR.

It belongs to the R-transferase family. Bpt subfamily.

It is found in the cytoplasm. It carries out the reaction N-terminal L-glutamyl-[protein] + L-leucyl-tRNA(Leu) = N-terminal L-leucyl-L-glutamyl-[protein] + tRNA(Leu) + H(+). The catalysed reaction is N-terminal L-aspartyl-[protein] + L-leucyl-tRNA(Leu) = N-terminal L-leucyl-L-aspartyl-[protein] + tRNA(Leu) + H(+). In terms of biological role, functions in the N-end rule pathway of protein degradation where it conjugates Leu from its aminoacyl-tRNA to the N-termini of proteins containing an N-terminal aspartate or glutamate. This chain is Aspartate/glutamate leucyltransferase, found in Stenotrophomonas maltophilia (strain R551-3).